A 336-amino-acid chain; its full sequence is Fructose-1,6-bisphosphatase class 1 (336 aa).

4 residues coordinate Mg(2+): glutamate 90, aspartate 112, leucine 114, and aspartate 115. Substrate-binding positions include 115 to 118 (DGSS), asparagine 211, and lysine 277. Mg(2+) is bound at residue glutamate 283.

Belongs to the FBPase class 1 family. Homotetramer. It depends on Mg(2+) as a cofactor.

It is found in the cytoplasm. The catalysed reaction is beta-D-fructose 1,6-bisphosphate + H2O = beta-D-fructose 6-phosphate + phosphate. Its pathway is carbohydrate biosynthesis; gluconeogenesis. The protein is Fructose-1,6-bisphosphatase class 1 of Pseudomonas aeruginosa (strain ATCC 15692 / DSM 22644 / CIP 104116 / JCM 14847 / LMG 12228 / 1C / PRS 101 / PAO1).